Here is a 230-residue protein sequence, read N- to C-terminus: Homeobox protein Hox-B5 (230 aa).

Positions 1-135 (GGGGGNVSGS…GAAGTDGQSP (135 aa)) are disordered. The span at 49 to 65 (FPGQESSRFRANQNCPL) shows a compositional bias: polar residues. Low complexity predominate over residues 87-103 (ATSSAHFTETEETSASS). The short motif at 137–142 (IFPWMR) is the Antp-type hexapeptide element. A DNA-binding region (homeobox) is located at residues 155-214 (GKRARTAYTRYQTLELEKEFHFNRYLTRRRRIEIAHTLCLSERQIKIWFQNRRMKWKKDN).

It belongs to the Antp homeobox family.

The protein resides in the nucleus. Sequence-specific transcription factor which is part of a developmental regulatory system that provides cells with specific positional identities on the anterior-posterior axis. The protein is Homeobox protein Hox-B5 (hoxb5) of Xenopus laevis (African clawed frog).